Consider the following 301-residue polypeptide: Developmental pluripotency-associated protein 2 (301 aa).

Positions 31–85 are disordered; the sequence is KEEEEPNTDYATQSNVSSSTLDHTPPARSLVRHAGIKHPTRTIPSTCPPPSLPPI. Over residues 39-52 the composition is skewed to polar residues; that stretch reads DYATQSNVSSSTLD. A compositionally biased stretch (basic residues) spans 60-70; it reads LVRHAGIKHPT. Residues 85–119 enclose the SAP domain; sequence IRDVSRNTLREWCRYHNLSTDGKKVEVYLRLRRHS.

Interacts with DPPA4. Not detected in adult tissues.

Its subcellular location is the nucleus. Binds to target gene promoters, including NKX2-5 and SYCE1, but not GATA4, and may be involved in the maintenance of the active epigenetic status of these genes. This is Developmental pluripotency-associated protein 2 (Dppa2) from Mus musculus (Mouse).